Here is a 680-residue protein sequence, read N- to C-terminus: Outer dense fiber protein 2 (680 aa).

Residues 27–46 (LPKPSATSSQKSHKRGMKGD) form a disordered region. Phosphoserine occurs at positions 68 and 69. The residue at position 87 (Thr87) is a Phosphothreonine. Ser90 is subject to Phosphoserine; by TSSK4. A phosphoserine mark is found at Ser101 and Ser104. At Thr105 the chain carries Phosphothreonine. Phosphoserine is present on residues Ser110 and Ser124. Residue Lys133 forms a Glycyl lysine isopeptide (Lys-Gly) (interchain with G-Cter in SUMO2) linkage. A Phosphoserine modification is found at Ser134. The stretch at 139 to 212 (QKGERQMAKR…MSKLVEAEMD (74 aa)) forms a coiled coil. At Thr226 the chain carries Phosphothreonine. Ser256 bears the Phosphoserine mark. Coiled coils occupy residues 275–418 (KEDS…AEQL) and 456–630 (EIIV…SDLR). The segment at 387-410 (KQKGDRDKESLKKAIRAQKERAEK) is disordered. The residue at position 627 (Ser627) is a Phosphoserine. Positions 632-680 (RETGGDQCPEYRVPTGDCQEGGGNPPVPAAARGENTGMWDPGKAVGERH) are disordered.

The protein belongs to the ODF2 family. As to quaternary structure, self-associates. Associates with microtubules and forms a fibrillar structure partially linked to the microtubule network. Interacts via its C-terminus with PLK1. Interacts with ODF1. Interacts with MARK4; the interaction is required for localization of ODF2 to centrioles. Interacts with TSSK4. Interacts with AKNA. Interacts with QRICH2. Interacts with CFAP58. Interacts with BBOF1. Interacts with CCDC38. Interacts with CCDC42. In terms of processing, tyrosine phosphorylated. Phosphorylated on Ser-90 by TSSK4.

The protein localises to the cytoplasm. It localises to the cytoskeleton. The protein resides in the microtubule organizing center. It is found in the centrosome. Its subcellular location is the cell projection. The protein localises to the cilium. It localises to the centriole. The protein resides in the spindle pole. It is found in the flagellum. Seems to be a major component of sperm tail outer dense fibers (ODF). ODFs are filamentous structures located on the outside of the axoneme in the midpiece and principal piece of the mammalian sperm tail and may help to maintain the passive elastic structures and elastic recoil of the sperm tail. May have a modulating influence on sperm motility. Functions as a general scaffold protein that is specifically localized at the distal/subdistal appendages of mother centrioles. Component of the centrosome matrix required for the localization of PLK1 and NIN to the centrosomes. Required for the formation and/or maintenance of normal CETN1 assembly. This chain is Outer dense fiber protein 2 (ODF2), found in Pongo abelii (Sumatran orangutan).